We begin with the raw amino-acid sequence, 548 residues long: Chaperonin GroEL (548 aa).

ATP is bound by residues 30–33 (TLGP), Lys-51, 87–91 (DGTTT), Gly-415, and Asp-495.

The protein belongs to the chaperonin (HSP60) family. As to quaternary structure, forms a cylinder of 14 subunits composed of two heptameric rings stacked back-to-back. Interacts with the co-chaperonin GroES.

The protein resides in the cytoplasm. The enzyme catalyses ATP + H2O + a folded polypeptide = ADP + phosphate + an unfolded polypeptide.. Functionally, together with its co-chaperonin GroES, plays an essential role in assisting protein folding. The GroEL-GroES system forms a nano-cage that allows encapsulation of the non-native substrate proteins and provides a physical environment optimized to promote and accelerate protein folding. The protein is Chaperonin GroEL of Erwinia tasmaniensis (strain DSM 17950 / CFBP 7177 / CIP 109463 / NCPPB 4357 / Et1/99).